The chain runs to 330 residues: Glycerol-3-phosphate dehydrogenase [NAD(P)+] (330 aa).

4 residues coordinate NADPH: Ser10, Trp11, Arg31, and Lys105. 3 residues coordinate sn-glycerol 3-phosphate: Lys105, Gly135, and Ser137. Ala139 serves as a coordination point for NADPH. Lys190, Asp243, Ser253, Arg254, and Asn255 together coordinate sn-glycerol 3-phosphate. Lys190 serves as the catalytic Proton acceptor. Arg254 provides a ligand contact to NADPH. Residues Val278 and Glu280 each contribute to the NADPH site.

This sequence belongs to the NAD-dependent glycerol-3-phosphate dehydrogenase family.

It is found in the cytoplasm. It catalyses the reaction sn-glycerol 3-phosphate + NAD(+) = dihydroxyacetone phosphate + NADH + H(+). It carries out the reaction sn-glycerol 3-phosphate + NADP(+) = dihydroxyacetone phosphate + NADPH + H(+). It functions in the pathway membrane lipid metabolism; glycerophospholipid metabolism. Its function is as follows. Catalyzes the reduction of the glycolytic intermediate dihydroxyacetone phosphate (DHAP) to sn-glycerol 3-phosphate (G3P), the key precursor for phospholipid synthesis. This chain is Glycerol-3-phosphate dehydrogenase [NAD(P)+], found in Oleidesulfovibrio alaskensis (strain ATCC BAA-1058 / DSM 17464 / G20) (Desulfovibrio alaskensis).